The primary structure comprises 237 residues: Ribonuclease PH (237 aa).

Residues arginine 86 and 124 to 126 (GTR) contribute to the phosphate site.

Belongs to the RNase PH family. In terms of assembly, homohexameric ring arranged as a trimer of dimers.

The enzyme catalyses tRNA(n+1) + phosphate = tRNA(n) + a ribonucleoside 5'-diphosphate. In terms of biological role, phosphorolytic 3'-5' exoribonuclease that plays an important role in tRNA 3'-end maturation. Removes nucleotide residues following the 3'-CCA terminus of tRNAs; can also add nucleotides to the ends of RNA molecules by using nucleoside diphosphates as substrates, but this may not be physiologically important. Probably plays a role in initiation of 16S rRNA degradation (leading to ribosome degradation) during starvation. This chain is Ribonuclease PH, found in Methylobacterium radiotolerans (strain ATCC 27329 / DSM 1819 / JCM 2831 / NBRC 15690 / NCIMB 10815 / 0-1).